The primary structure comprises 474 residues: MWTVQNRESLGLLSFPVMVAMVCCAHSSNEPSNMSYVKETVDRLLKGYDIRLRPDFGGPPVDVGMRIDVASIDMVSEVNMDYTLTMYFQQSWKDKRLSYSGIPLNLTLDNRVADQLWVPDTYFLNDKKSFVHGVTVKNRMIRLHPDGTVLYGLRITTTAACMMDLRRYPLDEQNCTLEIESYGYTTDDIEFYWNGGEGAVTGVNKIELPQFSIVDYKMVSKKVEFTTGAYPRLSLSFRLKRNIGYFILQTYMPSTLITILSWVSFWINYDASAARVALGITTVLTMTTISTHLRETLPKIPYVKAIDIYLMGCFVFVFLALLEYAFVNYIFFGKGPQKKGASKQDQSANEKNKLEMNKVQVDAHGNILLSTLEIRNETSGSEVLTGVSDPKATMYSYDSASIQYRKPLSSREGFGRGLDRHGVPGKGRIRRRASQLKVKIPDLTDVNSIDKWSRMFFPITFSLFNVVYWLYYVH.

Positions 1 to 25 are cleaved as a signal peptide; it reads MWTVQNRESLGLLSFPVMVAMVCCA. Residues 26–245 are Extracellular-facing; the sequence is HSSNEPSNMS…SFRLKRNIGY (220 aa). N-linked (GlcNAc...) asparagine glycosylation is found at Asn33 and Asn105. Tyr122 provides a ligand contact to histamine. An intrachain disulfide couples Cys161 to Cys175. A glycan (N-linked (GlcNAc...) asparagine) is linked at Asn174. Histamine-binding positions include 181–182 and Thr227; that span reads SY. 2 residues coordinate 4-aminobutanoate: Tyr182 and Thr227. The next 3 membrane-spanning stretches (helical) occupy residues 246–267, 271–293, and 305–327; these read FILQTYMPSTLITILSWVSFWI, ASAARVALGITTVLTMTTISTHL, and AIDIYLMGCFVFVFLALLEYAFV. At 328 to 451 the chain is on the cytoplasmic side; the sequence is NYIFFGKGPQ…DLTDVNSIDK (124 aa). The chain crosses the membrane as a helical span at residues 452–473; the sequence is WSRMFFPITFSLFNVVYWLYYV.

The protein belongs to the ligand-gated ion channel (TC 1.A.9) family. Gamma-aminobutyric acid receptor (TC 1.A.9.5) subfamily. GABRB1 sub-subfamily. In terms of assembly, heteropentamer, formed by a combination of alpha (GABRA1-6), beta (GABRB1-3), gamma (GABRG1-3), delta (GABRD), epsilon (GABRE), rho (GABRR1-3), pi (GABRP) and theta (GABRQ) chains, each subunit exhibiting distinct physiological and pharmacological properties. Binds UBQLN1.

It is found in the postsynaptic cell membrane. It localises to the cell membrane. The enzyme catalyses chloride(in) = chloride(out). Its activity is regulated as follows. Potentiated by histamine. In terms of biological role, beta subunit of the heteropentameric ligand-gated chloride channel gated by gamma-aminobutyric acid (GABA), a major inhibitory neurotransmitter in the brain. GABA-gated chloride channels, also named GABA(A) receptors (GABAAR), consist of five subunits arranged around a central pore and contain GABA active binding site(s) located at the alpha and beta subunit interface(s). When activated by GABA, GABAARs selectively allow the flow of chloride anions across the cell membrane down their electrochemical gradient. Chloride influx into the postsynaptic neuron following GABAAR opening decreases the neuron ability to generate a new action potential, thereby reducing nerve transmission. Beta-containing GABAARs can simultaneously bind GABA and histamine where histamine binds at the interface of two neighboring beta subunits, which may be involved in the regulation of sleep and wakefulness. The sequence is that of Gamma-aminobutyric acid receptor subunit beta-1 from Rattus norvegicus (Rat).